A 602-amino-acid chain; its full sequence is Proteasome-associated ATPase (602 aa).

Positions Pro-13–Gln-89 form a coiled coil. Gly-289–Leu-294 is an ATP binding site. Residues Tyr-601 to Leu-602 are docks into pockets in the proteasome alpha-ring.

Belongs to the AAA ATPase family. In terms of assembly, homohexamer. Assembles into a hexameric ring structure that caps the 20S proteasome core. Strongly interacts with the prokaryotic ubiquitin-like protein Pup through a hydrophobic interface; the interacting region of ARC lies in its N-terminal coiled-coil domain. There is one Pup binding site per ARC hexamer ring. Upon ATP-binding, the C-terminus of ARC interacts with the alpha-rings of the proteasome core, possibly by binding to the intersubunit pockets.

It functions in the pathway protein degradation; proteasomal Pup-dependent pathway. ATPase which is responsible for recognizing, binding, unfolding and translocation of pupylated proteins into the bacterial 20S proteasome core particle. May be essential for opening the gate of the 20S proteasome via an interaction with its C-terminus, thereby allowing substrate entry and access to the site of proteolysis. Thus, the C-termini of the proteasomal ATPase may function like a 'key in a lock' to induce gate opening and therefore regulate proteolysis. The sequence is that of Proteasome-associated ATPase from Mycobacteroides abscessus (strain ATCC 19977 / DSM 44196 / CCUG 20993 / CIP 104536 / JCM 13569 / NCTC 13031 / TMC 1543 / L948) (Mycobacterium abscessus).